We begin with the raw amino-acid sequence, 405 residues long: Phosphoglycerate kinase (405 aa).

Substrate-binding positions include 21 to 23 (DFN), arginine 36, 59 to 62 (HLGR), arginine 119, and arginine 161. ATP is bound by residues lysine 212, glycine 301, glutamate 332, and 361-364 (GGDS).

The protein belongs to the phosphoglycerate kinase family. As to quaternary structure, monomer.

It localises to the cytoplasm. The catalysed reaction is (2R)-3-phosphoglycerate + ATP = (2R)-3-phospho-glyceroyl phosphate + ADP. It functions in the pathway carbohydrate degradation; glycolysis; pyruvate from D-glyceraldehyde 3-phosphate: step 2/5. The protein is Phosphoglycerate kinase of Leuconostoc citreum (strain KM20).